Reading from the N-terminus, the 542-residue chain is Protein MPA43 (542 aa).

The protein is Protein MPA43 (MPA43) of Saccharomyces cerevisiae (strain ATCC 204508 / S288c) (Baker's yeast).